The sequence spans 432 residues: MTSMTTRVLTGITTSGTPHLGNYVGAIRPAIQASAGADAESFYFLADLHSLIKAQDPARTQRSTLEIAATWLACGLDPDKVWFYRQSDVPETTELMWLLTCVAGKGILNRAHAYKAAVDRNRADGEDEDAGVTAGLFMYPVLMAADILIFNAHQVPVGRDQIQHIEMARDFAQRFNHVYGREFFTLPEAVIDEQVSTLPGLDGRKMSKSYGNTIPLFAPREELRKLVFSILTDSRAPGQAKDTQGSALFQLYQAFATPQESAAFAQAFADGIGWGDAKQQVFERIDQEIAPLRTRYEGLIAEPARIEAILRAGGARLRARYATPLLAELRDAVGLRDLSSQAATAAVHASEKIALPVFKQYRESDGQFYFKLNDGAGALLLQSDGFASPRDAGQVIARLKQAAQASDLQLPGVHAQVDADVVLAAMDALREA.

ATP-binding positions include 13–15 and 21–22; these read TTS and GN. Residues 14–22 carry the 'HIGH' region motif; it reads TSGTPHLGN. An L-tryptophan-binding site is contributed by Asp146. ATP is bound by residues 158-160, Leu198, and 205-209; these read GRD and KMSKS. Positions 205-209 match the 'KMSKS' region motif; the sequence is KMSKS.

Belongs to the class-I aminoacyl-tRNA synthetase family. Homodimer.

The protein localises to the cytoplasm. It catalyses the reaction tRNA(Trp) + L-tryptophan + ATP = L-tryptophyl-tRNA(Trp) + AMP + diphosphate + H(+). Functionally, catalyzes the attachment of tryptophan to tRNA(Trp). This Xanthomonas axonopodis pv. citri (strain 306) protein is Tryptophan--tRNA ligase.